Reading from the N-terminus, the 319-residue chain is MSTINGCLTSISPSRTQLKNTSTLRPTFIANSRVNPSSSVPPSLIRNQPVFAAPAPIITPTLKEDMAYEEAIAALKKLLSEKGELENEAASKVAQITSELADGGTPSASYPVQRIKEGFIKFKKEKYEKNPALYGELSKGQAPKFMVFACSDSRVCPSHVLDFQPGEAFMVRNIANMVPVFDKDKYAGVGAAIEYAVLHLKVENIVVIGHSACGGIKGLMSFPDAGPTTTDFIEDWVKICLPAKHKVLAEHGNATFAEQCTHCEKEAVNVSLGNLLTYPFVRDGLVKKTLALQGGYYDFVNGSFELWGLEYGLSPSQSV.

The N-terminal 98 residues, 1-98 (MSTINGCLTS…AASKVAQITS (98 aa)), are a transit peptide targeting the chloroplast.

The protein belongs to the beta-class carbonic anhydrase family. Homohexamer.

Its subcellular location is the plastid. The protein resides in the chloroplast stroma. It catalyses the reaction hydrogencarbonate + H(+) = CO2 + H2O. Its function is as follows. Reversible hydration of carbon dioxide. The chain is Carbonic anhydrase, chloroplastic from Spinacia oleracea (Spinach).